We begin with the raw amino-acid sequence, 321 residues long: Ribonucleoside-diphosphate reductase small subunit (321 aa).

The Fe cation site is built by aspartate 78, glutamate 108, and histidine 111. Residue tyrosine 115 is part of the active site. A helical transmembrane segment spans residues 165-185; it reads ILMILIEGLFFASSFASIAYL. Positions 171, 205, and 208 each coordinate Fe cation.

This sequence belongs to the ribonucleoside diphosphate reductase small chain family. In terms of assembly, heterotetramer composed of a homodimer of the large subunit (R1) and a homodimer of the small subunit (R2). Larger multisubunit protein complex are also active, composed of (R1)n(R2)n. Requires Fe cation as cofactor.

Its subcellular location is the host membrane. It catalyses the reaction a 2'-deoxyribonucleoside 5'-diphosphate + [thioredoxin]-disulfide + H2O = a ribonucleoside 5'-diphosphate + [thioredoxin]-dithiol. Its function is as follows. Ribonucleoside-diphosphate reductase holoenzyme provides the precursors necessary for viral DNA synthesis. Allows virus growth in non-dividing cells, as well as reactivation from latency in infected hosts. Catalyzes the biosynthesis of deoxyribonucleotides from the corresponding ribonucleotides. This is Ribonucleoside-diphosphate reductase small subunit from Equus caballus (Horse).